The sequence spans 67 residues: Toxin Cex8 (67 aa).

A1 is a signal peptide. The LCN-type CS-alpha/beta domain maps to 2 to 65; sequence KEGYLVNIYT…SYPYPEKSCG (64 aa). Cystine bridges form between C13–C64, C17–C40, C26–C45, and C30–C47. Position 64 is a cysteine amide (C64). The propeptide occupies 65-67; that stretch reads GRK.

This sequence belongs to the long (4 C-C) scorpion toxin superfamily. Sodium channel inhibitor family. Beta subfamily. In terms of tissue distribution, expressed by the venom gland.

It localises to the secreted. Beta toxins bind voltage-independently at site-4 of sodium channels (Nav) and shift the voltage of activation toward more negative potentials thereby affecting sodium channel activation and promoting spontaneous and repetitive firing. This is Toxin Cex8 from Centruroides exilicauda (Bark scorpion).